Here is a 187-residue protein sequence, read N- to C-terminus: Protein dj-1beta (187 aa).

A Cysteine sulfinic acid (-SO2H) modification is found at cysteine 45. The active-site Nucleophile is the cysteine 104. Cysteine 104 is subject to Cysteine sulfinic acid (-SO2H); alternate.

Oxidation of Cys-45 and Cys-104 in response to oxidative stress. Levels of oxidation increase with age. In terms of tissue distribution, expressed in the head and testis (at protein level). Ubiquitously expressed at constant levels.

It is found in the mitochondrion. The protein localises to the cytoplasm. It localises to the nucleus. Its function is as follows. Plays an important role in cell protection against oxidative stress and cell death by acting as a oxidative stress sensor. Does not play a role in methylglyoxal detoxification. Plays a role in mitochondrial function together with Pink1. In motor neurons regulates structural synaptic plasticity of locomotor behavior as part of the PTEN-phosphatidylinositol 3-kinase pathway in response to oxygen species (ROS) levels. This Drosophila melanogaster (Fruit fly) protein is Protein dj-1beta.